Consider the following 419-residue polypeptide: Phosphatidylcholine:ceramide cholinephosphotransferase 1 (419 aa).

Residues 13-76 (WSPKKVADWL…LDMIETLKME (64 aa)) form the SAM domain. The residue at position 14 (S14) is a Phosphoserine. Transmembrane regions (helical) follow at residues 142 to 162 (FLAF…ISVV), 190 to 210 (FSIC…QWLL), 221 to 241 (FFCI…VTTL), 282 to 302 (MCGD…YLFI), and 310 to 330 (LWWY…CILL). H291 is an active-site residue. The Cytoplasmic segment spans residues 331–419 (AHDHYTVDVV…VKYSRLVNDT (89 aa)). Active-site residues include H334 and D338.

The protein belongs to the sphingomyelin synthase family. In terms of tissue distribution, isoform 1 is widely expressed, isoform 2 shows a more narrow distribution and isoform 3 is detected only in testis and heart.

Its subcellular location is the golgi apparatus membrane. It carries out the reaction an N-acylsphing-4-enine + a 1,2-diacyl-sn-glycero-3-phosphocholine = a sphingomyelin + a 1,2-diacyl-sn-glycerol. The catalysed reaction is 1-(9Z-octadecenoyl)-2-acyl-sn-3-glycerol + a sphingomyelin = a 1-(9Z-octadecenoyl)-2-acyl-sn-glycero-3-phosphocholine + an N-acylsphing-4-enine. It catalyses the reaction N-hexadecanoylsphinganine + a 1,2-diacyl-sn-glycero-3-phosphocholine = N-hexadecanoyl-sphinganine-1-phosphocholine + a 1,2-diacyl-sn-glycerol. The enzyme catalyses N-hexadecanoyl-(4R)-hydroxysphinganine + a 1,2-diacyl-sn-glycero-3-phosphocholine = N-hexadecanoyl-(4R)-hydroxysphinganine-phosphocholine + a 1,2-diacyl-sn-glycerol. It carries out the reaction an N-acylsphing-4-enine + a 1,2-diacyl-sn-glycero-3-phosphoethanolamine = an N-acylsphing-4-enine 1-phosphoethanolamine + a 1,2-diacyl-sn-glycerol. The protein operates within sphingolipid metabolism. Major sphingomyelin synthase at the Golgi apparatus. Catalyzes the reversible transfer of phosphocholine moiety in sphingomyelin biosynthesis: in the forward reaction transfers phosphocholine head group of phosphatidylcholine (PC) on to ceramide (CER) to form ceramide phosphocholine (sphingomyelin, SM) and diacylglycerol (DAG) as by-product, and in the reverse reaction transfers phosphocholine from SM to DAG to form PC and CER. The direction of the reaction depends on the levels of CER and DAG in Golgi membranes. Converts the newly synthesized CER, that is transported from the endoplasmic reticulum to the trans-Golgi by the Cer transport protein (CERT), to SM. Can form a heteromeric complex with glucosylceramide synthase (GCS) increasing SMS activity and reducing glucosylceramide synthesis, a critical mechanism that controls the metabolic fate of CER in the Golgi. Does not use free phosphorylcholine or CDP-choline as donor. Can also transfer phosphoethanolamine head group of phosphatidylethanolamine (PE) on to CER to form ceramide phosphoethanolamine (CPE). Regulates receptor-mediated signal transduction via mitogenic DAG and proapoptotic CER, as well as via SM, a structural component of membrane rafts that serve as platforms for signal transduction and protein sorting. Plays a role in secretory transport via regulation of DAG pool at the Golgi apparatus and its downstream effects on PRKD1. Functionally, (Microbial infection) Contributes to the brain SM production for Japanese encephalitis virus attachment and infection. This is Phosphatidylcholine:ceramide cholinephosphotransferase 1 (Sgms1) from Mus musculus (Mouse).